The following is a 359-amino-acid chain: MAKLPVDKMRELERRFGEIEARMSAGPAADVYVKLASEYSELQPVVKAIRELGLAEKEVADLKALLADKSTDREMRDLAEMELPDVEARLEGLEKEIQIQLLPKDAADEKSAILEIRAGTGGSEAALFAGDLFRMYERFAAGKGWKVEVLSSSEGDAGGFKEIIATVTGRGVFSKLKFESGVHRVQRVPDTETQGRIHTSAATVAVLPEAEEIDIEVRAEDIRIDTMRSSGAGGQHVNTTDSAVRITHLPTGLVVTSSEKSQHQNRAKAMQVLRSRLFDMERQRADSERSADRKSQVGSGDRSERIRTYNFPQGRVTDHRINLTLYKLDRMMMGEIDEVVDALIADYQAGQLAQLGEQA.

At Gln-235 the chain carries N5-methylglutamine. Over residues 282–307 (RQRADSERSADRKSQVGSGDRSERIR) the composition is skewed to basic and acidic residues. Residues 282 to 309 (RQRADSERSADRKSQVGSGDRSERIRTY) form a disordered region.

It belongs to the prokaryotic/mitochondrial release factor family. Methylated by PrmC. Methylation increases the termination efficiency of RF1.

Its subcellular location is the cytoplasm. In terms of biological role, peptide chain release factor 1 directs the termination of translation in response to the peptide chain termination codons UAG and UAA. This is Peptide chain release factor 1 from Allorhizobium ampelinum (strain ATCC BAA-846 / DSM 112012 / S4) (Agrobacterium vitis (strain S4)).